A 575-amino-acid chain; its full sequence is Mitochondrial 2-methylisocitrate lyase ICL2 (575 aa).

Residue Cys238 is part of the active site.

This sequence belongs to the isocitrate lyase/PEP mutase superfamily. Isocitrate lyase family.

It localises to the mitochondrion matrix. It carries out the reaction (2S,3R)-3-hydroxybutane-1,2,3-tricarboxylate = pyruvate + succinate. Its pathway is organic acid metabolism; propanoate degradation. Catalyzes the formation of pyruvate and succinate from 2-methylisocitrate during the metabolism of endogenous propionyl-CoA. Does not act on isocitrate. This chain is Mitochondrial 2-methylisocitrate lyase ICL2 (ICL2), found in Saccharomyces cerevisiae (strain ATCC 204508 / S288c) (Baker's yeast).